The primary structure comprises 343 residues: UPF0324 membrane protein LJ_1117 (343 aa).

10 consecutive transmembrane segments (helical) span residues F10–L27, Y32–V54, I64–T86, A91–L113, L123–Q145, N157–I179, A219–Y241, I262–V284, G288–F310, and G317–S339.

The protein belongs to the UPF0324 family.

Its subcellular location is the cell membrane. The sequence is that of UPF0324 membrane protein LJ_1117 from Lactobacillus johnsonii (strain CNCM I-12250 / La1 / NCC 533).